We begin with the raw amino-acid sequence, 508 residues long: Putative inorganic phosphate transporter 1-13 (508 aa).

Topologically, residues 1-22 (MAGNQQLRVLHALDIARTQLYH) are cytoplasmic. The helical transmembrane segment at 23–43 (FIAIVIAGMGFFTDAYDLFSI) threads the bilayer. Residues 44–64 (SLVADLLGHVYYHGELPRNIH) lie on the Extracellular side of the membrane. A helical membrane pass occupies residues 65 to 85 (AAVTGIALCGTVPGQLVFGWL). Over 86–93 (GDKMGRKR) the chain is Cytoplasmic. A helical transmembrane segment spans residues 94–114 (VYGITLLLMVVSSLASGLSFS). The Extracellular segment spans residues 115–117 (KHE). The chain crosses the membrane as a helical span at residues 118 to 138 (GMNIIAVLCFFRFWLGVSIGG). Residues 139–159 (DYPLSATIMSEYANKRTRGAF) are Cytoplasmic-facing. A helical transmembrane segment spans residues 160 to 180 (IAAVFAMQGFGNLAAGIIGMI). At 181–192 (VSAAFKHSSASK) the chain is on the extracellular side. The chain crosses the membrane as a helical span at residues 193–213 (IDYAWRIILMFGAIPAALTYH). Residues 214–277 (WRMKMPETAR…FEFLHRHGLH (64 aa)) are Cytoplasmic-facing. Residues 278-298 (LLGTTVCWFVLDVTFYSLNIF) traverse the membrane as a helical segment. The Extracellular segment spans residues 299 to 328 (MKNIFTEVGLLPRLDSEYHHTLQRMITMTA). A helical transmembrane segment spans residues 329–349 (VHTFISLCGALPGYFFTVAFV). Residues 350–354 (DRIGR) lie on the Cytoplasmic side of the membrane. A helical membrane pass occupies residues 355 to 375 (VKIQLIGFTMMTVFMLCLAIP). The Extracellular segment spans residues 376–389 (YDQWLRHKNKYGFA). A helical transmembrane segment spans residues 390-410 (VMYGLTFFFANFGPNTTTFII). At 411-424 (PAEIFPARLRSTCH) the chain is on the cytoplasmic side. Residues 425 to 445 (GISGAVGKIGAIVGVFGFLYT) form a helical membrane-spanning segment. Residues 446-450 (EYHIR) lie on the Extracellular side of the membrane. The chain crosses the membrane as a helical span at residues 451–471 (IFLFVLIGCNLVGFIFTLLLP). Topologically, residues 472-508 (ESKGKSLEDLTGEIEEFQEEDEGSEVALSRPIHTVPL) are cytoplasmic.

The protein belongs to the major facilitator superfamily. Phosphate:H(+) symporter (TC 2.A.1.9) family.

The protein resides in the membrane. In terms of biological role, high-affinity transporter for external inorganic phosphate. The sequence is that of Putative inorganic phosphate transporter 1-13 (PHT1-13) from Oryza sativa subsp. japonica (Rice).